A 1204-amino-acid chain; its full sequence is ATP-dependent helicase/nuclease subunit A (1204 aa).

Residues 2-472 enclose the UvrD-like helicase ATP-binding domain; sequence PQFTKEQEKA…ILLSDNFRST (471 aa). Position 23-30 (23-30) interacts with ATP; it reads ASAGSGKT. The UvrD-like helicase C-terminal domain maps to 500-783; the sequence is GQLIFGAKYY…RLMTIHGSKG (284 aa).

This sequence belongs to the helicase family. AddA subfamily. Heterodimer of AddA and AddB/RexB. Mg(2+) serves as cofactor.

The catalysed reaction is Couples ATP hydrolysis with the unwinding of duplex DNA by translocating in the 3'-5' direction.. The enzyme catalyses ATP + H2O = ADP + phosphate + H(+). The heterodimer acts as both an ATP-dependent DNA helicase and an ATP-dependent, dual-direction single-stranded exonuclease. Recognizes the chi site generating a DNA molecule suitable for the initiation of homologous recombination. The AddA nuclease domain is required for chi fragment generation; this subunit has the helicase and 3' -&gt; 5' nuclease activities. In Lactobacillus helveticus (strain DPC 4571), this protein is ATP-dependent helicase/nuclease subunit A.